The chain runs to 805 residues: Sucrose synthase 1 (805 aa).

Positions 274-751 are GT-B glycosyltransferase; the sequence is MVFNVVILSP…GLQRIYEKYT (478 aa).

This sequence belongs to the glycosyltransferase 1 family. Plant sucrose synthase subfamily.

The enzyme catalyses an NDP-alpha-D-glucose + D-fructose = a ribonucleoside 5'-diphosphate + sucrose + H(+). Its function is as follows. Sucrose-cleaving enzyme that provides UDP-glucose and fructose for various metabolic pathways. The chain is Sucrose synthase 1 from Tulipa gesneriana (Garden tulip).